Here is a 366-residue protein sequence, read N- to C-terminus: MNINCSPLGFLISLFFIVTFLAPQVKSRAFFVFGDSLVDNGNNDYLVTTARADNYPYGIDYPTRRPTGRFSNGLNIPDIISEAIGMPSTLPYLSPHLTGENLLVGANFASAGIGILNDTGIQFVNIIRISKQMEYFEQYQLRVSALIGPEATQQLVNQALVLITLGGNDFVNNYYLIPFSARSRQYALPDYVVYLISEYGKILRKLYELGARRVLVTGTGAMGCAPAELAQHSRNGECYGALQTAAALFNPQLVDLIASVNAEIGQDVFVAANAYQMNMDYLSNPEQFGFVTSKVACCGQGPYNGIGLCTPVSNLCPNRDLYAFWDAFHPTEKANRIIVNQILTGSSKYMHPMNLSTAMLLDSSKI.

The N-terminal stretch at 1-27 (MNINCSPLGFLISLFFIVTFLAPQVKS) is a signal peptide. Residue serine 36 is the Nucleophile of the active site. Residue asparagine 117 is glycosylated (N-linked (GlcNAc...) asparagine). Active-site residues include aspartate 326 and histidine 329. N-linked (GlcNAc...) asparagine glycosylation is present at asparagine 354.

The protein belongs to the 'GDSL' lipolytic enzyme family. As to quaternary structure, binds to VLG at the endomembrane system. In terms of tissue distribution, mostly expressed in flowers, reproductive stems and rosette leaves, and, to a lower extent, in roots.

The protein localises to the secreted. Its function is as follows. Involved in the mechanisms of salt tolerance. Mediates resistance to LiCl and NaCl. This chain is GDSL esterase/lipase LTL1, found in Arabidopsis thaliana (Mouse-ear cress).